Here is a 466-residue protein sequence, read N- to C-terminus: Chromosomal replication initiator protein DnaA (466 aa).

Residues 1 to 86 (MSLSLWQQCL…EVGTKPVTQT (86 aa)) are domain I, interacts with DnaA modulators. The tract at residues 86-129 (TLKTPVHNVVAPTQTTTAQPQRVAPAARSGWDNVPAPAEPTYRS) is domain II. A domain III, AAA+ region region spans residues 130–346 (NVNVKHTFDN…GALNRVIANA (217 aa)). Residues Gly174, Gly176, Lys177, and Thr178 each coordinate ATP. The segment at 347-466 (NFTGRAITID…FSNLIRTLSS (120 aa)) is domain IV, binds dsDNA.

The protein belongs to the DnaA family. In terms of assembly, oligomerizes as a right-handed, spiral filament on DNA at oriC.

The protein localises to the cytoplasm. In terms of biological role, plays an essential role in the initiation and regulation of chromosomal replication. ATP-DnaA binds to the origin of replication (oriC) to initiate formation of the DNA replication initiation complex once per cell cycle. Binds the DnaA box (a 9 base pair repeat at the origin) and separates the double-stranded (ds)DNA. Forms a right-handed helical filament on oriC DNA; dsDNA binds to the exterior of the filament while single-stranded (ss)DNA is stabiized in the filament's interior. The ATP-DnaA-oriC complex binds and stabilizes one strand of the AT-rich DNA unwinding element (DUE), permitting loading of DNA polymerase. After initiation quickly degrades to an ADP-DnaA complex that is not apt for DNA replication. Binds acidic phospholipids. The chain is Chromosomal replication initiator protein DnaA from Salmonella dublin (strain CT_02021853).